The chain runs to 226 residues: Cytidylate kinase (226 aa).

11–19 (GPAGAGKST) serves as a coordination point for ATP.

Belongs to the cytidylate kinase family. Type 1 subfamily.

Its subcellular location is the cytoplasm. The catalysed reaction is CMP + ATP = CDP + ADP. It catalyses the reaction dCMP + ATP = dCDP + ADP. This is Cytidylate kinase from Pelotomaculum thermopropionicum (strain DSM 13744 / JCM 10971 / SI).